Reading from the N-terminus, the 61-residue chain is uncharacterized protein (61 aa).

This is an uncharacterized protein from Dictyostelium discoideum (Social amoeba).